The primary structure comprises 338 residues: uncharacterized protein (338 aa).

6 consecutive transmembrane segments (helical) span residues 13-33 (PAYSHVLIAGGIGGATADFLM), 71-91 (GLYSGVCPMLIGSLPATALFF), 110-130 (TLCFLLAGFVGDLFASVVYVP), 176-196 (YGYRATILRDIPFSGFQLLFY), 218-238 (LITGSLAGAGAGFLTTPLDVA), and 301-321 (FRGFGPRIFWTSSQSSLMFVF). 3 Solcar repeats span residues 13–100 (PAYS…TKRH), 108–202 (PETL…LRQV), and 216–328 (RELI…IIRL).

This sequence belongs to the mitochondrial carrier (TC 2.A.29) family.

It localises to the mitochondrion inner membrane. Mitochondrial solute carriers shuttle metabolites, nucleotides, and cofactors through the mitochondrial inner membrane. This is an uncharacterized protein from Schizosaccharomyces pombe (strain 972 / ATCC 24843) (Fission yeast).